The sequence spans 173 residues: MDIAIQHPWFKRALGPFYPSRLFDQFFGEGLFEYDLLPFLSSTISPYYRQSLFRTVLDSGISEVRSDRDKFVIFLDVKHFSPEDLTVKVQEDFVEIHGKHNERQDDHGYISREFHRRYRLPSNVDQSALSCSLSADGMLTFSGPKIPSGVDAGHSERAIPVSREEKPSSAPSS.

Methionine 1 is subject to N-acetylmethionine. The tract at residues 1–63 (MDIAIQHPWF…RTVLDSGISE (63 aa)) is required for complex formation with BFSP1 and BFSP2. A Deamidated glutamine; partial modification is found at glutamine 6. Position 45 is a phosphoserine (serine 45). Glutamine 50 is modified (deamidated glutamine; partial). The sHSP domain maps to 52-162 (LFRTVLDSGI…GHSERAIPVS (111 aa)). At lysine 70 the chain carries N6-acetyllysine. Glutamine 90 is modified (deamidated glutamine; partial). N6-acetyllysine is present on lysine 99. Histidine 100 contributes to the Zn(2+) binding site. Deamidated asparagine; partial is present on asparagine 101. Zn(2+)-binding residues include glutamate 102 and histidine 107. Serine 122 bears the Phosphoserine mark. Asparagine 123 is subject to Deamidated asparagine; partial. The tract at residues 144 to 173 (PKIPSGVDAGHSERAIPVSREEKPSSAPSS) is disordered. The span at 153–167 (GHSERAIPVSREEKP) shows a compositional bias: basic and acidic residues. Zn(2+) is bound at residue histidine 154. The O-linked (GlcNAc) serine glycan is linked to serine 162.

It belongs to the small heat shock protein (HSP20) family. In terms of assembly, heteromer composed of three CRYAA and one CRYAB subunits. Inter-subunit bridging via zinc ions enhances stability, which is crucial as there is no protein turn over in the lens. Can also form homodimers and homotetramers (dimers of dimers) which serve as the building blocks of homooligomers. Within homooligomers, the zinc-binding motif is created from residues of 3 different molecules. His-100 and Glu-102 from one molecule are ligands of the zinc ion, and His-107 and His-154 residues from additional molecules complete the site with tetrahedral coordination geometry. Part of a complex required for lens intermediate filament formation composed of BFSP1, BFSP2 and CRYAA. In terms of processing, acetylation at Lys-70 may increase chaperone activity. Post-translationally, undergoes age-dependent proteolytical cleavage at the C-terminus.

The protein resides in the cytoplasm. It is found in the nucleus. Functionally, contributes to the transparency and refractive index of the lens. Acts as a chaperone, preventing aggregation of various proteins under a wide range of stress conditions. Required for the correct formation of lens intermediate filaments as part of a complex composed of BFSP1, BFSP2 and CRYAA. This is Alpha-crystallin A chain (CRYAA) from Giraffa camelopardalis (Giraffe).